A 192-amino-acid chain; its full sequence is Ornithine lipid N-methyltransferase (192 aa).

It belongs to the methyltransferase superfamily.

The catalysed reaction is an N(2)-[(3R)-3-(2-saturated-acyloxy)acyl]-L-ornithine lipid + 3 S-adenosyl-L-methionine = an N,N,N-trimethylornithine lipid + 3 S-adenosyl-L-homocysteine + 3 H(+). In terms of biological role, catalyzes the 3-fold methylation of ornithine lipids. Forms ornithine lipids that are mono-, di-, and trimethylated on the delta-nitrogen of the ornithine head group. This Singulisphaera acidiphila (strain ATCC BAA-1392 / DSM 18658 / VKM B-2454 / MOB10) protein is Ornithine lipid N-methyltransferase.